The primary structure comprises 409 residues: tRNA(Met) cytidine acetate ligase (409 aa).

ATP contacts are provided by residues 7-20 (VVEY…HLHH), glycine 102, asparagine 169, and arginine 194.

This sequence belongs to the TmcAL family.

It is found in the cytoplasm. It carries out the reaction cytidine(34) in elongator tRNA(Met) + acetate + ATP = N(4)-acetylcytidine(34) in elongator tRNA(Met) + AMP + diphosphate. Its function is as follows. Catalyzes the formation of N(4)-acetylcytidine (ac(4)C) at the wobble position of elongator tRNA(Met), using acetate and ATP as substrates. First activates an acetate ion to form acetyladenylate (Ac-AMP) and then transfers the acetyl group to tRNA to form ac(4)C34. The chain is tRNA(Met) cytidine acetate ligase from Clostridium botulinum (strain Loch Maree / Type A3).